The following is a 124-amino-acid chain: Small ribosomal subunit protein uS12 (124 aa).

Position 89 is a 3-methylthioaspartic acid (Asp89).

The protein belongs to the universal ribosomal protein uS12 family. Part of the 30S ribosomal subunit. Contacts proteins S8 and S17. May interact with IF1 in the 30S initiation complex.

Functionally, with S4 and S5 plays an important role in translational accuracy. In terms of biological role, interacts with and stabilizes bases of the 16S rRNA that are involved in tRNA selection in the A site and with the mRNA backbone. Located at the interface of the 30S and 50S subunits, it traverses the body of the 30S subunit contacting proteins on the other side and probably holding the rRNA structure together. The combined cluster of proteins S8, S12 and S17 appears to hold together the shoulder and platform of the 30S subunit. The chain is Small ribosomal subunit protein uS12 from Aliivibrio fischeri (strain ATCC 700601 / ES114) (Vibrio fischeri).